Reading from the N-terminus, the 315-residue chain is tRNA dimethylallyltransferase (315 aa).

10–17 (GPTATGKS) is a binding site for ATP. Residue 12–17 (TATGKS) participates in substrate binding. Residues 35-38 (DSMQ) form an interaction with substrate tRNA region.

This sequence belongs to the IPP transferase family. Monomer. It depends on Mg(2+) as a cofactor.

It carries out the reaction adenosine(37) in tRNA + dimethylallyl diphosphate = N(6)-dimethylallyladenosine(37) in tRNA + diphosphate. Catalyzes the transfer of a dimethylallyl group onto the adenine at position 37 in tRNAs that read codons beginning with uridine, leading to the formation of N6-(dimethylallyl)adenosine (i(6)A). The sequence is that of tRNA dimethylallyltransferase from Caldanaerobacter subterraneus subsp. tengcongensis (strain DSM 15242 / JCM 11007 / NBRC 100824 / MB4) (Thermoanaerobacter tengcongensis).